The chain runs to 355 residues: Elongation factor Ts (355 aa).

Residues Thr82–Val85 form an involved in Mg(2+) ion dislocation from EF-Tu region.

This sequence belongs to the EF-Ts family.

It localises to the cytoplasm. In terms of biological role, associates with the EF-Tu.GDP complex and induces the exchange of GDP to GTP. It remains bound to the aminoacyl-tRNA.EF-Tu.GTP complex up to the GTP hydrolysis stage on the ribosome. The protein is Elongation factor Ts of Helicobacter pylori (strain HPAG1).